A 418-amino-acid chain; its full sequence is Coenzyme A biosynthesis bifunctional protein CoaBC (418 aa).

The tract at residues 1–195 (MVDHKRIPKQ…ALPYDLAGRK (195 aa)) is phosphopantothenoylcysteine decarboxylase. The interval 196 to 418 (LLVTAGGTRE…IVTFLAGCSS (223 aa)) is phosphopantothenate--cysteine ligase. CTP contacts are provided by Asp-285, Lys-295, Phe-336, Lys-354, and Lys-358.

This sequence in the N-terminal section; belongs to the HFCD (homo-oligomeric flavin containing Cys decarboxylase) superfamily. The protein in the C-terminal section; belongs to the PPC synthetase family. It depends on Mg(2+) as a cofactor. The cofactor is FMN.

It carries out the reaction N-[(R)-4-phosphopantothenoyl]-L-cysteine + H(+) = (R)-4'-phosphopantetheine + CO2. The catalysed reaction is (R)-4'-phosphopantothenate + L-cysteine + CTP = N-[(R)-4-phosphopantothenoyl]-L-cysteine + CMP + diphosphate + H(+). It functions in the pathway cofactor biosynthesis; coenzyme A biosynthesis; CoA from (R)-pantothenate: step 2/5. Its pathway is cofactor biosynthesis; coenzyme A biosynthesis; CoA from (R)-pantothenate: step 3/5. In terms of biological role, catalyzes two sequential steps in the biosynthesis of coenzyme A. In the first step cysteine is conjugated to 4'-phosphopantothenate to form 4-phosphopantothenoylcysteine. In the second step the latter compound is decarboxylated to form 4'-phosphopantotheine. This chain is Coenzyme A biosynthesis bifunctional protein CoaBC, found in Mycobacterium bovis (strain ATCC BAA-935 / AF2122/97).